The chain runs to 511 residues: Glucans biosynthesis protein G (511 aa).

The first 22 residues, M1–A22, serve as a signal peptide directing secretion.

It belongs to the OpgD/OpgG family.

The protein resides in the periplasm. It participates in glycan metabolism; osmoregulated periplasmic glucan (OPG) biosynthesis. Involved in the biosynthesis of osmoregulated periplasmic glucans (OPGs). In Shigella boydii serotype 4 (strain Sb227), this protein is Glucans biosynthesis protein G.